The sequence spans 385 residues: ATP phosphoribosyltransferase regulatory subunit (385 aa).

Belongs to the class-II aminoacyl-tRNA synthetase family. HisZ subfamily. Heteromultimer composed of HisG and HisZ subunits.

Its subcellular location is the cytoplasm. It participates in amino-acid biosynthesis; L-histidine biosynthesis; L-histidine from 5-phospho-alpha-D-ribose 1-diphosphate: step 1/9. Required for the first step of histidine biosynthesis. May allow the feedback regulation of ATP phosphoribosyltransferase activity by histidine. The polypeptide is ATP phosphoribosyltransferase regulatory subunit (Lysinibacillus sphaericus (strain C3-41)).